An 89-amino-acid chain; its full sequence is Small ribosomal subunit protein uS15 (89 aa).

Residues 1–21 (MALTTEEKKQVLSEYGLHETD) are compositionally biased toward basic and acidic residues. The tract at residues 1 to 24 (MALTTEEKKQVLSEYGLHETDTGS) is disordered.

This sequence belongs to the universal ribosomal protein uS15 family. Part of the 30S ribosomal subunit. Forms a bridge to the 50S subunit in the 70S ribosome, contacting the 23S rRNA.

One of the primary rRNA binding proteins, it binds directly to 16S rRNA where it helps nucleate assembly of the platform of the 30S subunit by binding and bridging several RNA helices of the 16S rRNA. Its function is as follows. Forms an intersubunit bridge (bridge B4) with the 23S rRNA of the 50S subunit in the ribosome. The chain is Small ribosomal subunit protein uS15 from Rhodococcus opacus (strain B4).